The chain runs to 348 residues: Isopentenyl-diphosphate delta-isomerase (348 aa).

14 to 15 lines the substrate pocket; sequence RK. Residues serine 72, 73-75, serine 103, and asparagine 131 contribute to the FMN site; that span reads SMT. 103–105 is a binding site for substrate; sequence SQR. Glutamine 166 is a substrate binding site. Glutamate 167 is a binding site for Mg(2+). FMN-binding positions include lysine 198, threonine 228, 278–280, and 299–300; these read GIR and AR.

The protein belongs to the IPP isomerase type 2 family. Homooctamer. Dimer of tetramers. FMN serves as cofactor. Requires NADPH as cofactor. Mg(2+) is required as a cofactor.

It localises to the cytoplasm. It carries out the reaction isopentenyl diphosphate = dimethylallyl diphosphate. In terms of biological role, involved in the biosynthesis of isoprenoids. Catalyzes the 1,3-allylic rearrangement of the homoallylic substrate isopentenyl (IPP) to its allylic isomer, dimethylallyl diphosphate (DMAPP). In Synechococcus sp. (strain ATCC 27144 / PCC 6301 / SAUG 1402/1) (Anacystis nidulans), this protein is Isopentenyl-diphosphate delta-isomerase.